The following is a 346-amino-acid chain: Uroporphyrinogen decarboxylase (346 aa).

Residues 26–30, Asp-76, Tyr-153, Ser-208, and His-323 each bind substrate; that span reads RQAGR.

It belongs to the uroporphyrinogen decarboxylase family. As to quaternary structure, homodimer.

The protein resides in the cytoplasm. It catalyses the reaction uroporphyrinogen III + 4 H(+) = coproporphyrinogen III + 4 CO2. It functions in the pathway porphyrin-containing compound metabolism; protoporphyrin-IX biosynthesis; coproporphyrinogen-III from 5-aminolevulinate: step 4/4. Its function is as follows. Catalyzes the decarboxylation of four acetate groups of uroporphyrinogen-III to yield coproporphyrinogen-III. The sequence is that of Uroporphyrinogen decarboxylase from Prochlorococcus marinus (strain MIT 9301).